The chain runs to 108 residues: Integration host factor subunit alpha (108 aa).

The protein belongs to the bacterial histone-like protein family. In terms of assembly, heterodimer of an alpha and a beta chain.

Functionally, this protein is one of the two subunits of integration host factor, a specific DNA-binding protein that functions in genetic recombination as well as in transcriptional and translational control. The sequence is that of Integration host factor subunit alpha from Bartonella henselae (strain ATCC 49882 / DSM 28221 / CCUG 30454 / Houston 1) (Rochalimaea henselae).